We begin with the raw amino-acid sequence, 101 residues long: MDKSKRLFLKSKRSFRRRLPPIQSGDRIDYRNMSLISRFISEQGKILSRRVNRLTLKQQRLITIAIKQARILCLLPFLNNEKQFERSESTPRTTGLRIKNK.

This sequence belongs to the bacterial ribosomal protein bS18 family. Part of the 30S ribosomal subunit.

The protein localises to the plastid. It localises to the chloroplast. The polypeptide is Small ribosomal subunit protein bS18c (Morus indica (Mulberry)).